The following is a 157-amino-acid chain: Transcription elongation factor GreA (157 aa).

Positions 14 to 37 (LREELDRLLKLRPKITEAIAEARE) form a coiled coil.

The protein belongs to the GreA/GreB family.

Necessary for efficient RNA polymerase transcription elongation past template-encoded arresting sites. The arresting sites in DNA have the property of trapping a certain fraction of elongating RNA polymerases that pass through, resulting in locked ternary complexes. Cleavage of the nascent transcript by cleavage factors such as GreA or GreB allows the resumption of elongation from the new 3'terminus. GreA releases sequences of 2 to 3 nucleotides. This Vibrio cholerae serotype O1 (strain ATCC 39315 / El Tor Inaba N16961) protein is Transcription elongation factor GreA.